The sequence spans 343 residues: tRNA N6-adenosine threonylcarbamoyltransferase (343 aa).

Fe cation is bound by residues His120 and His124. Substrate is bound by residues 142 to 146 (VVSGG), Asp175, Gly188, Asp192, and Asn281. Asp310 serves as a coordination point for Fe cation.

This sequence belongs to the KAE1 / TsaD family. Fe(2+) serves as cofactor.

The protein resides in the cytoplasm. It carries out the reaction L-threonylcarbamoyladenylate + adenosine(37) in tRNA = N(6)-L-threonylcarbamoyladenosine(37) in tRNA + AMP + H(+). Functionally, required for the formation of a threonylcarbamoyl group on adenosine at position 37 (t(6)A37) in tRNAs that read codons beginning with adenine. Is involved in the transfer of the threonylcarbamoyl moiety of threonylcarbamoyl-AMP (TC-AMP) to the N6 group of A37, together with TsaE and TsaB. TsaD likely plays a direct catalytic role in this reaction. This chain is tRNA N6-adenosine threonylcarbamoyltransferase, found in Bacillus cereus (strain ATCC 10987 / NRS 248).